The following is an 809-amino-acid chain: Lon protease (809 aa).

The Lon N-terminal domain maps to 20-216 (LPLLALRDVV…ELMNYLMNQS (197 aa)). Residue 369-376 (GPPGVGKT) coordinates ATP. One can recognise a Lon proteolytic domain in the interval 606–787 (EAQVGRVNGL…DEILPLALTS (182 aa)). Catalysis depends on residues Ser-693 and Lys-736.

It belongs to the peptidase S16 family. In terms of assembly, homohexamer. Organized in a ring with a central cavity.

The protein localises to the cytoplasm. The enzyme catalyses Hydrolysis of proteins in presence of ATP.. ATP-dependent serine protease that mediates the selective degradation of mutant and abnormal proteins as well as certain short-lived regulatory proteins. Required for cellular homeostasis and for survival from DNA damage and developmental changes induced by stress. Degrades polypeptides processively to yield small peptide fragments that are 5 to 10 amino acids long. Binds to DNA in a double-stranded, site-specific manner. The sequence is that of Lon protease from Acinetobacter baumannii (strain AB307-0294).